The sequence spans 226 residues: UPF0502 protein Daci_5373 (226 aa).

This sequence belongs to the UPF0502 family.

The protein is UPF0502 protein Daci_5373 of Delftia acidovorans (strain DSM 14801 / SPH-1).